We begin with the raw amino-acid sequence, 447 residues long: Tubulin beta chain (447 aa).

GTP is bound by residues Q11, E69, S138, G142, T143, G144, N204, and N226. Residue E69 coordinates Mg(2+). The segment at 427 to 447 is disordered; that stretch reads EAHMDDEEAEEAYEDEAPPEE. Positions 430 to 447 are enriched in acidic residues; sequence MDDEEAEEAYEDEAPPEE.

The protein belongs to the tubulin family. In terms of assembly, dimer of alpha and beta chains. A typical microtubule is a hollow water-filled tube with an outer diameter of 25 nm and an inner diameter of 15 nM. Alpha-beta heterodimers associate head-to-tail to form protofilaments running lengthwise along the microtubule wall with the beta-tubulin subunit facing the microtubule plus end conferring a structural polarity. Microtubules usually have 13 protofilaments but different protofilament numbers can be found in some organisms and specialized cells. Mg(2+) serves as cofactor.

It is found in the cytoplasm. Its subcellular location is the cytoskeleton. In terms of biological role, tubulin is the major constituent of microtubules, a cylinder consisting of laterally associated linear protofilaments composed of alpha- and beta-tubulin heterodimers. Microtubules grow by the addition of GTP-tubulin dimers to the microtubule end, where a stabilizing cap forms. Below the cap, tubulin dimers are in GDP-bound state, owing to GTPase activity of alpha-tubulin. This chain is Tubulin beta chain (TBB1), found in Uromyces fabae (Rust fungus).